The sequence spans 1255 residues: Period circadian protein homolog 2 (1255 aa).

Residues 1 to 79 form a disordered region; it reads MNGYAEFPPS…EPPDARQSPD (79 aa). Residues 35–56 show a composition bias toward polar residues; the sequence is SSGSSGHETNENCSTGRDSQGS. A Nuclear export signal 1 motif is present at residues 111-120; it reads LIKTLKELKV. Positions 181-248 constitute a PAS 1 domain; that stretch reads VTSEHIVKNA…FHSFTSPYKL (68 aa). Residues 308 to 312 carry the LXXLL motif; the sequence is LCCLL. The region spanning 321-387 is the PAS 2 domain; it reads YEAPRIPPEK…MLAIHKKILQ (67 aa). Residues 395-438 form the PAC domain; that stretch reads YSPIRFRARNGEYITLDTSWSSFINPWSRKISFIIGRHKVRVGP. The short motif at 462–471 is the Nuclear export signal 2 element; the sequence is LTEQIHRLLL. 2 disordered regions span residues 473–557 and 617–646; these read PVPH…AVPA and RSSDKRKATVSPGPHAGEAEPPSRVNSRTG. Positions 480–484 are important for protein stability; sequence SGYGS. The span at 504-516 shows a compositional bias: basic and acidic residues; it reads NGHEDSRRRRAEI. Positions 512-717 are CSNK1E binding domain; it reads RRAEICKNGN…ALACGLSQEK (206 aa). Phosphoserine is present on residues S527, S530, S533, and S540. Residues 529–541 are compositionally biased toward basic and acidic residues; that stretch reads YSHESGEQKKKSV. Phosphoserine is present on residues S662, S696, S700, S714, S766, and S771. Disordered regions lie at residues 764–838 and 931–985; these read ERSK…DTSQ and FPSH…QSRS. The Nuclear localization signal motif lies at 789-805; that stretch reads KKTGKNRKLKSKRVKPR. Residues 790–803 show a composition bias toward basic residues; it reads KTGKNRKLKSKRVK. 2 stretches are compositionally biased toward polar residues: residues 829–838 and 936–956; these read TAWSPSDTSQ and TLTSEMASASQPEFPSRTSIP. An interaction with PPARG region spans residues 888-1071; that stretch reads QFAVQPPPFP…NEDLCSASGS (184 aa). Phosphoserine is present on S945. Residues 959 to 972 are compositionally biased toward low complexity; the sequence is PCACPATRATPPSA. Position 977 is a phosphoserine (S977). Positions 989–996 match the Nuclear export signal 3 motif; the sequence is LQLNLLQL. Residues 1018-1050 form a disordered region; that stretch reads VGADCKPGTSRDQQPKAPLTRDEPSDTQNSDAL. The short motif at 1057 to 1061 is the LXXLL element; that stretch reads LNLLL. The segment at 1077–1106 is disordered; that stretch reads LGSGSLGCDASPSGAGSSDTSHTSKYFGSI. Polar residues predominate over residues 1090-1106; the sequence is GAGSSDTSHTSKYFGSI. S1124 is subject to Phosphoserine. Residues 1155–1255 form a CRY binding domain region; sequence SRNLEAVLKE…PLNHRIEEQT (101 aa). The tract at residues 1231–1255 is disordered; that stretch reads GLSEVSDTKEDENGSPLNHRIEEQT.

As to quaternary structure, homodimer. Component of the circadian core oscillator, which includes the CRY proteins, CLOCK or NPAS2, BMAL1 or BMAL2, CSNK1D and/or CSNK1E, TIMELESS, and the PER proteins. Interacts with CLOCK-BMAL1 (off DNA). Interacts with BMAL2. Interacts directly with PER1 and PER3, and through a C-terminal domain, with CRY1 and CRY2. Interacts (via PAS 2 domain) with TIMELESS. Interacts with NFIL3. Different large complexes have been identified with different repressive functions. The core of PER complexes is composed of at least PER1, PER2, PER3, CRY1, CRY2, CSNK1D and/or CSNK1E. The large PER complex involved in the repression of transcriptional termination is composed of at least PER2, CDK9, DDX5, DHX9, NCBP1 and POLR2A (active). The large PER complex involved in the histone deacetylation is composed of at least HDAC1, PER2, SFPQ and SIN3A. The large PER complex involved in the histone methylation is composed of at least PER2, CBX3, TRIM28, SUV39H1 and/or SUV39H2; CBX3 mediates the formation of the complex. Interacts with SETX; the interaction inhibits termination of circadian target genes. Interacts with the nuclear receptors HNF4A, NR1D1, NR4A2, RORA, PPARA, PPARG and THRA; the interaction with at least PPARG is ligand dependent. Interacts with PML. Interacts (phosphorylated) with BTRC and FBXW11; the interactions trigger proteasomal degradation. Interacts with NONO and SFPQ. Interacts with CAVIN3. Interacts with MAGEL2. Interacts with MAP1LC3B. Interacts with HNF4A. Acetylated. Deacetylated by SIRT1, resulting in decreased protein stability. Deacetylated by SIRT6, preventing its degradation by the proteasome, resulting in increased protein stability. Post-translationally, phosphorylated by CSNK1E and CSNK1D. Phosphorylation results in PER2 protein degradation. May be dephosphorylated by PP1. In terms of processing, ubiquitinated, leading to its proteasomal degradation. Ubiquitination may be inhibited by CRY1. Widely expressed. Found in heart, brain, placenta, lung, liver, skeleatal muscle, kidney and pancreas. High levels in skeletal muscle and pancreas. Low levels in lung. Isoform 2 is expressed in keratinocytes (at protein level).

Its subcellular location is the nucleus. It localises to the cytoplasm. It is found in the perinuclear region. The protein localises to the nucleolus. Functionally, transcriptional repressor which forms a core component of the circadian clock. The circadian clock, an internal time-keeping system, regulates various physiological processes through the generation of approximately 24 hour circadian rhythms in gene expression, which are translated into rhythms in metabolism and behavior. It is derived from the Latin roots 'circa' (about) and 'diem' (day) and acts as an important regulator of a wide array of physiological functions including metabolism, sleep, body temperature, blood pressure, endocrine, immune, cardiovascular, and renal function. Consists of two major components: the central clock, residing in the suprachiasmatic nucleus (SCN) of the brain, and the peripheral clocks that are present in nearly every tissue and organ system. Both the central and peripheral clocks can be reset by environmental cues, also known as Zeitgebers (German for 'timegivers'). The predominant Zeitgeber for the central clock is light, which is sensed by retina and signals directly to the SCN. The central clock entrains the peripheral clocks through neuronal and hormonal signals, body temperature and feeding-related cues, aligning all clocks with the external light/dark cycle. Circadian rhythms allow an organism to achieve temporal homeostasis with its environment at the molecular level by regulating gene expression to create a peak of protein expression once every 24 hours to control when a particular physiological process is most active with respect to the solar day. Transcription and translation of core clock components (CLOCK, NPAS2, BMAL1, BMAL2, PER1, PER2, PER3, CRY1 and CRY2) plays a critical role in rhythm generation, whereas delays imposed by post-translational modifications (PTMs) are important for determining the period (tau) of the rhythms (tau refers to the period of a rhythm and is the length, in time, of one complete cycle). A diurnal rhythm is synchronized with the day/night cycle, while the ultradian and infradian rhythms have a period shorter and longer than 24 hours, respectively. Disruptions in the circadian rhythms contribute to the pathology of cardiovascular diseases, cancer, metabolic syndrome and aging. A transcription/translation feedback loop (TTFL) forms the core of the molecular circadian clock mechanism. Transcription factors, CLOCK or NPAS2 and BMAL1 or BMAL2, form the positive limb of the feedback loop, act in the form of a heterodimer and activate the transcription of core clock genes and clock-controlled genes (involved in key metabolic processes), harboring E-box elements (5'-CACGTG-3') within their promoters. The core clock genes: PER1/2/3 and CRY1/2 which are transcriptional repressors form the negative limb of the feedback loop and interact with the CLOCK|NPAS2-BMAL1|BMAL2 heterodimer inhibiting its activity and thereby negatively regulating their own expression. This heterodimer also activates nuclear receptors NR1D1/2 and RORA/B/G, which form a second feedback loop and which activate and repress BMAL1 transcription, respectively. PER1 and PER2 proteins transport CRY1 and CRY2 into the nucleus with appropriate circadian timing, but also contribute directly to repression of clock-controlled target genes through interaction with several classes of RNA-binding proteins, helicases and others transcriptional repressors. PER appears to regulate circadian control of transcription by at least three different modes. First, interacts directly with the CLOCK-BMAL1 at the tail end of the nascent transcript peak to recruit complexes containing the SIN3-HDAC that remodel chromatin to repress transcription. Second, brings H3K9 methyltransferases such as SUV39H1 and SUV39H2 to the E-box elements of the circadian target genes, like PER2 itself or PER1. The recruitment of each repressive modifier to the DNA seems to be very precisely temporally orchestrated by the large PER complex, the deacetylases acting before than the methyltransferases. Additionally, large PER complexes are also recruited to the target genes 3' termination site through interactions with RNA-binding proteins and helicases that may play a role in transcription termination to regulate transcription independently of CLOCK-BMAL1 interactions. Recruitment of large PER complexes to the elongating polymerase at PER and CRY termination sites inhibited SETX action, impeding RNA polymerase II release and thereby repressing transcriptional reinitiation. May propagate clock information to metabolic pathways via the interaction with nuclear receptors. Coactivator of PPARA and corepressor of NR1D1, binds rhythmically at the promoter of nuclear receptors target genes like BMAL1 or G6PC1. Directly and specifically represses PPARG proadipogenic activity by blocking PPARG recruitment to target promoters and thereby inhibiting transcriptional activation. Required for fatty acid and lipid metabolism, is involved as well in the regulation of circulating insulin levels. Plays an important role in the maintenance of cardiovascular functions through the regulation of NO and vasodilatatory prostaglandins production in aortas. Controls circadian glutamate uptake in synaptic vesicles through the regulation of VGLUT1 expression. May also be involved in the regulation of inflammatory processes. Represses the CLOCK-BMAL1 induced transcription of BHLHE40/DEC1 and ATF4. Negatively regulates the formation of the TIMELESS-CRY1 complex by competing with TIMELESS for binding to CRY1. The sequence is that of Period circadian protein homolog 2 (PER2) from Homo sapiens (Human).